The primary structure comprises 363 residues: DNA replication and repair protein RecF (363 aa).

30-37 (GPNGSGKT) lines the ATP pocket.

It belongs to the RecF family.

Its subcellular location is the cytoplasm. The RecF protein is involved in DNA metabolism; it is required for DNA replication and normal SOS inducibility. RecF binds preferentially to single-stranded, linear DNA. It also seems to bind ATP. This chain is DNA replication and repair protein RecF, found in Chlorobium phaeobacteroides (strain BS1).